Here is a 1024-residue protein sequence, read N- to C-terminus: Error-prone DNA polymerase (1024 aa).

The protein belongs to the DNA polymerase type-C family. DnaE2 subfamily.

Its subcellular location is the cytoplasm. It carries out the reaction DNA(n) + a 2'-deoxyribonucleoside 5'-triphosphate = DNA(n+1) + diphosphate. Functionally, DNA polymerase involved in damage-induced mutagenesis and translesion synthesis (TLS). It is not the major replicative DNA polymerase. This is Error-prone DNA polymerase from Vibrio parahaemolyticus serotype O3:K6 (strain RIMD 2210633).